The sequence spans 177 residues: Insertion element IS1223 uncharacterized 20.7 kDa protein (177 aa).

Residues 112 to 131 form a disordered region; sequence KQKGRPRKVPKKSKKTTKKL. Residues 113–128 show a composition bias toward basic residues; it reads QKGRPRKVPKKSKKTT.

The protein belongs to the IS150/IS1296 orfA family.

In Lactobacillus johnsonii, this protein is Insertion element IS1223 uncharacterized 20.7 kDa protein.